The primary structure comprises 336 residues: Phospho-N-acetylmuramoyl-pentapeptide-transferase (336 aa).

The next 10 membrane-spanning stretches (helical) occupy residues L3–I23, G53–I73, S78–L98, L118–I138, V143–V163, G174–A194, F200–N220, V226–A246, W251–V271, and A316–F336.

It belongs to the glycosyltransferase 4 family. MraY subfamily. Requires Mg(2+) as cofactor.

The protein localises to the cell membrane. It carries out the reaction UDP-N-acetyl-alpha-D-muramoyl-L-alanyl-gamma-D-glutamyl-L-lysyl-D-alanyl-D-alanine + di-trans,octa-cis-undecaprenyl phosphate = Mur2Ac(oyl-L-Ala-gamma-D-Glu-L-Lys-D-Ala-D-Ala)-di-trans,octa-cis-undecaprenyl diphosphate + UMP. It participates in cell wall biogenesis; peptidoglycan biosynthesis. In terms of biological role, catalyzes the initial step of the lipid cycle reactions in the biosynthesis of the cell wall peptidoglycan: transfers peptidoglycan precursor phospho-MurNAc-pentapeptide from UDP-MurNAc-pentapeptide onto the lipid carrier undecaprenyl phosphate, yielding undecaprenyl-pyrophosphoryl-MurNAc-pentapeptide, known as lipid I. This is Phospho-N-acetylmuramoyl-pentapeptide-transferase from Streptococcus pyogenes serotype M5 (strain Manfredo).